We begin with the raw amino-acid sequence, 950 residues long: MLSSWQGGPRPRQLLLWLLILAAWETGSGQLHYSVPEEAKHGTFVGRIAQDLGLELAELVPRLFRVASKRHGDLLEVNLQNGILFVNSRIDREELCGRSAECSIHLEVIVDRPLQVFHVEVKVRDINDNPPIFPESKKRIIIAESRPPETRFPLDGASDADIGVNSALTYRLDPNDYFTLDAQNSLEQMSSLSLVLRKTLDREEIQEHSLLLTASDGGKPELTGTVQLLITILDVNDNAPEFYQSVYKVTVLENAFNGTLVIKLNATDPDDGTNGDIVYSFRRPVWPAVVYAFTINPNNGEIRTKGKLDFEEKKLYEISVEAVDKGNIPMAGHCTLLVEVLDVNDNAPEVTITSLSLPIREDTQPSAIIALISVSDRDSGSNGQVTCTLTPHVPFKLVSTYKNYYSLVLDSALDRESVSAYELVVTARDGGSPSLWATASVSVGVADVNDNAPAFAQPEYTVFVKENNPPGCHIFTVSAQDADAQENALVSYSLVERRVGERALSSYVSVHAESGKVYALQPLDHEELELLQFQVSARDSGVPPLGSNVTLQVFVLDENDNAPALLTPGAGSAGGTVSELMPRSVGAGHVVAKVRAVDADSGYNAWLSYELQLAAVGARIPFRVGLYTGEISTTRPLDEVDAPHHRLLVLVKDHGEPALTATATVLLSLVESGQAPQASSRASAGAVGPEAALVDVNVYLIIAICAVSSLLVLTLLLYTALRCSAPPTEGACAPGKPTLVCSSAAGSWSYSQQRRPRVCSGEGPHKTDLMAFSPSLPPCLGSAEGTGQREEDSECLKEPRQPNPDWRYSASLRAGMHSSVHLEEAGILRAGPGGPDQQWPTVSSATPEPEAGEVSPPVGAGVNSNSWTFKYGPGNPKQSGPGELPDKFIIPGSPAIISIRQEPTNSQIDKSDFITFGKKEETKKKKKKKKGNKTQEKKEKGNSTTDNSDQ.

A signal peptide spans 1 to 29 (MLSSWQGGPRPRQLLLWLLILAAWETGSG). Over 30-697 (QLHYSVPEEA…GPEAALVDVN (668 aa)) the chain is Extracellular. Cadherin domains are found at residues 34-133 (SVPE…PPIF), 134-242 (PESK…APEF), 243-350 (YQSV…APEV), 351-455 (TITS…APAF), 456-565 (AQPE…APAL), and 581-678 (MPRS…APQA). Residues N257 and N265 are each glycosylated (N-linked (GlcNAc...) asparagine). N548 is a glycosylation site (N-linked (GlcNAc...) asparagine). Residues 698 to 718 (VYLIIAICAVSSLLVLTLLLY) form a helical membrane-spanning segment. The Cytoplasmic segment spans residues 719–950 (TALRCSAPPT…GNSTTDNSDQ (232 aa)). PXXP repeat units follow at residues 734-737 (PGKP), 774-777 (PSLP), 799-802 (PRQP), 832-835 (PGGP), 873-876 (PGNP), and 891-894 (PGSP). A 6 X 4 AA repeats of P-X-X-P region spans residues 734–894 (PGKPTLVCSS…PDKFIIPGSP (161 aa)). 2 disordered regions span residues 780-806 (LGSA…NPDW) and 829-950 (RAGP…NSDQ). Positions 787–800 (GQREEDSECLKEPR) are enriched in basic and acidic residues. Basic and acidic residues predominate over residues 909-923 (DKSDFITFGKKEETK).

The protein resides in the cell membrane. Its function is as follows. Potential calcium-dependent cell-adhesion protein. May be involved in the establishment and maintenance of specific neuronal connections in the brain. This chain is Protocadherin alpha-13 (PCDHA13), found in Homo sapiens (Human).